A 107-amino-acid polypeptide reads, in one-letter code: Large ribosomal subunit protein uL24 (107 aa).

This sequence belongs to the universal ribosomal protein uL24 family. As to quaternary structure, part of the 50S ribosomal subunit.

One of two assembly initiator proteins, it binds directly to the 5'-end of the 23S rRNA, where it nucleates assembly of the 50S subunit. Functionally, one of the proteins that surrounds the polypeptide exit tunnel on the outside of the subunit. The sequence is that of Large ribosomal subunit protein uL24 from Thermotoga neapolitana (strain ATCC 49049 / DSM 4359 / NBRC 107923 / NS-E).